The chain runs to 526 residues: Germ cell-less protein-like 2 (526 aa).

A disordered region spans residues 1–85; it reads MGSSSSRVLG…DKQQPLLNTP (85 aa). The Nuclear localization signal motif lies at 49–55; sequence SHKRKRS. A compositionally biased stretch (basic and acidic residues) spans 62–77; sequence CDPDSHREEHEEEGDK. A Nuclear localization signal motif is present at residues 85–91; it reads PARKKLR. Residues 108 to 178 form the BTB domain; the sequence is SDIKICALGE…LYRDDVLIKP (71 aa).

Interacts with CUL3. As to expression, expressed predominantly in testis.

It is found in the nucleus matrix. It participates in protein modification; protein ubiquitination. In terms of biological role, possible function in spermatogenesis. Probable substrate-specific adapter of an E3 ubiquitin-protein ligase complex which mediates the ubiquitination and subsequent proteasomal degradation of target proteins. The sequence is that of Germ cell-less protein-like 2 from Homo sapiens (Human).